We begin with the raw amino-acid sequence, 215 residues long: Pyridoxine/pyridoxamine 5'-phosphate oxidase (215 aa).

Residues 9 to 12 and Lys-69 each bind substrate; that span reads RRDY. Residues 64-69, 79-80, Lys-86, and Gln-108 contribute to the FMN site; these read RILLLK and FT. Residues Tyr-126, Arg-130, and Ser-134 each coordinate substrate. FMN-binding positions include 143–144 and Trp-188; that span reads QS. 194 to 196 provides a ligand contact to substrate; the sequence is RLH. FMN is bound at residue Arg-198.

This sequence belongs to the pyridoxamine 5'-phosphate oxidase family. In terms of assembly, homodimer. FMN is required as a cofactor.

The catalysed reaction is pyridoxamine 5'-phosphate + O2 + H2O = pyridoxal 5'-phosphate + H2O2 + NH4(+). It carries out the reaction pyridoxine 5'-phosphate + O2 = pyridoxal 5'-phosphate + H2O2. Its pathway is cofactor metabolism; pyridoxal 5'-phosphate salvage; pyridoxal 5'-phosphate from pyridoxamine 5'-phosphate: step 1/1. It functions in the pathway cofactor metabolism; pyridoxal 5'-phosphate salvage; pyridoxal 5'-phosphate from pyridoxine 5'-phosphate: step 1/1. Catalyzes the oxidation of either pyridoxine 5'-phosphate (PNP) or pyridoxamine 5'-phosphate (PMP) into pyridoxal 5'-phosphate (PLP). This Pseudomonas fluorescens (strain Pf0-1) protein is Pyridoxine/pyridoxamine 5'-phosphate oxidase.